The chain runs to 452 residues: Phosphoglucosamine mutase (452 aa).

Ser108 serves as the catalytic Phosphoserine intermediate. Residues Ser108, Asp247, Asp249, and Asp251 each contribute to the Mg(2+) site. At Ser108 the chain carries Phosphoserine.

The protein belongs to the phosphohexose mutase family. Mg(2+) is required as a cofactor. In terms of processing, activated by phosphorylation.

The enzyme catalyses alpha-D-glucosamine 1-phosphate = D-glucosamine 6-phosphate. In terms of biological role, catalyzes the conversion of glucosamine-6-phosphate to glucosamine-1-phosphate. This Paraburkholderia phytofirmans (strain DSM 17436 / LMG 22146 / PsJN) (Burkholderia phytofirmans) protein is Phosphoglucosamine mutase.